We begin with the raw amino-acid sequence, 278 residues long: Cation-dependent mannose-6-phosphate receptor (278 aa).

An N-terminal signal peptide occupies residues 1–21 (MFPFSGCWRTELLLLLLLAVA). Topologically, residues 22–186 (VRESWQIEEK…SLACSPEVSH (165 aa)) are lumenal. The 152-residue stretch at 31–182 (KSCDLVGEKD…EMDSSLACSP (152 aa)) folds into the MRH domain. A disulfide bridge connects residues C33 and C79. 5 N-linked (GlcNAc...) asparagine glycosylation sites follow: N58, N84, N95, N108, and N114. 2 disulfide bridges follow: C133–C168 and C146–C180. A helical transmembrane segment spans residues 187–211 (LSVGSILLVIFASLVAVYIIGGFLY). Over 212 to 278 (QRLVVGAKGM…EERDDHLLPM (67 aa)) the chain is Cytoplasmic. A disordered region spans residues 257–278 (RGVGDDQLGEESEERDDHLLPM). Position 268 is a phosphoserine (S268).

Homodimer. Binds GGA1, GGA2 and GGA3.

It localises to the lysosome membrane. Its function is as follows. Transport of phosphorylated lysosomal enzymes from the Golgi complex and the cell surface to lysosomes. Lysosomal enzymes bearing phosphomannosyl residues bind specifically to mannose-6-phosphate receptors in the Golgi apparatus and the resulting receptor-ligand complex is transported to an acidic prelyosomal compartment where the low pH mediates the dissociation of the complex. In Mus musculus (Mouse), this protein is Cation-dependent mannose-6-phosphate receptor (M6pr).